We begin with the raw amino-acid sequence, 174 residues long: Shikimate kinase 2 (174 aa).

Residue 12–17 (GCGKTT) participates in ATP binding. Mg(2+)-binding residues include Thr-16 and Asp-32. 3 residues coordinate substrate: Asp-34, Arg-58, and Gly-79. An LID domain region spans residues 112–126 (EAFPEEGQRPTLTGK). Arg-120 is a binding site for ATP. Arg-139 lines the substrate pocket. An ATP-binding site is contributed by Gln-155.

This sequence belongs to the shikimate kinase family. AroL subfamily. In terms of assembly, monomer. It depends on Mg(2+) as a cofactor.

It is found in the cytoplasm. It carries out the reaction shikimate + ATP = 3-phosphoshikimate + ADP + H(+). The protein operates within metabolic intermediate biosynthesis; chorismate biosynthesis; chorismate from D-erythrose 4-phosphate and phosphoenolpyruvate: step 5/7. Catalyzes the specific phosphorylation of the 3-hydroxyl group of shikimic acid using ATP as a cosubstrate. In Enterobacter sp. (strain 638), this protein is Shikimate kinase 2.